We begin with the raw amino-acid sequence, 218 residues long: Peptide methionine sulfoxide reductase MsrA (218 aa).

Residue Cys-57 is part of the active site.

The protein belongs to the MsrA Met sulfoxide reductase family.

It carries out the reaction L-methionyl-[protein] + [thioredoxin]-disulfide + H2O = L-methionyl-(S)-S-oxide-[protein] + [thioredoxin]-dithiol. The catalysed reaction is [thioredoxin]-disulfide + L-methionine + H2O = L-methionine (S)-S-oxide + [thioredoxin]-dithiol. Has an important function as a repair enzyme for proteins that have been inactivated by oxidation. Catalyzes the reversible oxidation-reduction of methionine sulfoxide in proteins to methionine. The sequence is that of Peptide methionine sulfoxide reductase MsrA from Brucella melitensis biotype 1 (strain ATCC 23456 / CCUG 17765 / NCTC 10094 / 16M).